A 238-amino-acid chain; its full sequence is Ribosomal RNA small subunit methyltransferase G (238 aa).

S-adenosyl-L-methionine is bound by residues glycine 106, leucine 111, 157-158 (IE), and arginine 170.

It belongs to the methyltransferase superfamily. RNA methyltransferase RsmG family.

It localises to the cytoplasm. It catalyses the reaction guanosine(527) in 16S rRNA + S-adenosyl-L-methionine = N(7)-methylguanosine(527) in 16S rRNA + S-adenosyl-L-homocysteine. Functionally, specifically methylates the N7 position of guanine in position 527 of 16S rRNA. In Psychrobacter arcticus (strain DSM 17307 / VKM B-2377 / 273-4), this protein is Ribosomal RNA small subunit methyltransferase G.